Here is a 627-residue protein sequence, read N- to C-terminus: Bromodomain adjacent to zinc finger domain protein 1A (627 aa).

Residues 222–272 (NARCKVCRKKGDGESMVLCDGCDRGHHIYCVRPKLKYVPEGDWFCPECHPK) form a PHD-type zinc finger. The segment at 270–503 (HPKQRSHRLP…NRRSSGRHHG (234 aa)) is disordered. The span at 272-283 (KQRSHRLPSRHR) shows a compositional bias: basic residues. Residues 281-327 (RHRYSMDSDEEEEEELDQKEEEEEEEEQEELSESENEQEDEMSEEES) adopt a coiled-coil conformation. Positions 287–326 (DSDEEEEEELDQKEEEEEEEEQEELSESENEQEDEMSEEE) are enriched in acidic residues. Over residues 348-359 (TGKLGPKPKTGK) the composition is skewed to low complexity. Composition is skewed to polar residues over residues 386–395 (EPTSRLSASD) and 402–412 (SPNSSLVNVVT). Residues 417–431 (GRGKGKGRGRGRGRL) show a composition bias toward basic residues. Positions 486–496 (DISSLEQGNRR) are enriched in polar residues. Residues 502–605 (HGVHELSACE…SFFITEAQNL (104 aa)) form the Bromo domain.

Belongs to the WAL family. As to quaternary structure, together with p18 and p20 proteins, it forms the Xenopus version of CHRAC. Phosphorylated in mitosis.

Its subcellular location is the nucleus. Regulatory subunit of a chromatin remodeling complex, which forms ordered nucleosome arrays on chromatin and slides edge- and center-positioned histone octamers away from their original location on the DNA template to facilitate access to DNA during DNA-templated processes such as DNA replication, transcription, and repair. Involved in regulating the spacing of nucleosomes along the chromatin and have the ability to slide mononucleosomes to the center of a DNA template in an ATP-dependent manner. May play a role in transcriptional regulation. The sequence is that of Bromodomain adjacent to zinc finger domain protein 1A (baz1a) from Xenopus laevis (African clawed frog).